A 289-amino-acid chain; its full sequence is ATP synthase gamma chain (289 aa).

The protein belongs to the ATPase gamma chain family. In terms of assembly, F-type ATPases have 2 components, CF(1) - the catalytic core - and CF(0) - the membrane proton channel. CF(1) has five subunits: alpha(3), beta(3), gamma(1), delta(1), epsilon(1). CF(0) has three main subunits: a, b and c.

It localises to the cell inner membrane. Produces ATP from ADP in the presence of a proton gradient across the membrane. The gamma chain is believed to be important in regulating ATPase activity and the flow of protons through the CF(0) complex. The sequence is that of ATP synthase gamma chain from Haemophilus influenzae (strain ATCC 51907 / DSM 11121 / KW20 / Rd).